The primary structure comprises 427 residues: Adenylosuccinate synthetase (427 aa).

Residues 12-18 (GDEGKGK) and 40-42 (GHT) each bind GTP. Residue D13 is the Proton acceptor of the active site. The Mg(2+) site is built by D13 and G40. IMP contacts are provided by residues 13–16 (DEGK), 38–41 (NAGH), T128, R142, Q223, T238, and R302. The active-site Proton donor is H41. Residue 298-304 (TTTGRPR) participates in substrate binding. GTP contacts are provided by residues R304, 330-332 (SID), and 412-414 (SVG).

This sequence belongs to the adenylosuccinate synthetase family. As to quaternary structure, homodimer. Mg(2+) is required as a cofactor.

It is found in the cytoplasm. The catalysed reaction is IMP + L-aspartate + GTP = N(6)-(1,2-dicarboxyethyl)-AMP + GDP + phosphate + 2 H(+). Its pathway is purine metabolism; AMP biosynthesis via de novo pathway; AMP from IMP: step 1/2. In terms of biological role, plays an important role in the de novo pathway of purine nucleotide biosynthesis. Catalyzes the first committed step in the biosynthesis of AMP from IMP. This chain is Adenylosuccinate synthetase, found in Staphylococcus saprophyticus subsp. saprophyticus (strain ATCC 15305 / DSM 20229 / NCIMB 8711 / NCTC 7292 / S-41).